The following is a 341-amino-acid chain: S-adenosylmethionine:tRNA ribosyltransferase-isomerase (341 aa).

Belongs to the QueA family. Monomer.

The protein localises to the cytoplasm. The enzyme catalyses 7-aminomethyl-7-carbaguanosine(34) in tRNA + S-adenosyl-L-methionine = epoxyqueuosine(34) in tRNA + adenine + L-methionine + 2 H(+). Its pathway is tRNA modification; tRNA-queuosine biosynthesis. Functionally, transfers and isomerizes the ribose moiety from AdoMet to the 7-aminomethyl group of 7-deazaguanine (preQ1-tRNA) to give epoxyqueuosine (oQ-tRNA). In Clostridium kluyveri (strain NBRC 12016), this protein is S-adenosylmethionine:tRNA ribosyltransferase-isomerase.